We begin with the raw amino-acid sequence, 336 residues long: Holliday junction branch migration complex subunit RuvB (336 aa).

The tract at residues M1–Y183 is large ATPase domain (RuvB-L). Residues L22, R23, G64, K67, T68, T69, E130–F132, R173, Y183, and R220 contribute to the ATP site. Mg(2+) is bound at residue T68. Residues Q184–Q254 form a small ATPAse domain (RuvB-S) region. The tract at residues S257–E336 is head domain (RuvB-H). 2 residues coordinate DNA: R293 and R317.

It belongs to the RuvB family. Homohexamer. Forms an RuvA(8)-RuvB(12)-Holliday junction (HJ) complex. HJ DNA is sandwiched between 2 RuvA tetramers; dsDNA enters through RuvA and exits via RuvB. An RuvB hexamer assembles on each DNA strand where it exits the tetramer. Each RuvB hexamer is contacted by two RuvA subunits (via domain III) on 2 adjacent RuvB subunits; this complex drives branch migration. In the full resolvosome a probable DNA-RuvA(4)-RuvB(12)-RuvC(2) complex forms which resolves the HJ.

The protein localises to the cytoplasm. It catalyses the reaction ATP + H2O = ADP + phosphate + H(+). Functionally, the RuvA-RuvB-RuvC complex processes Holliday junction (HJ) DNA during genetic recombination and DNA repair, while the RuvA-RuvB complex plays an important role in the rescue of blocked DNA replication forks via replication fork reversal (RFR). RuvA specifically binds to HJ cruciform DNA, conferring on it an open structure. The RuvB hexamer acts as an ATP-dependent pump, pulling dsDNA into and through the RuvAB complex. RuvB forms 2 homohexamers on either side of HJ DNA bound by 1 or 2 RuvA tetramers; 4 subunits per hexamer contact DNA at a time. Coordinated motions by a converter formed by DNA-disengaged RuvB subunits stimulates ATP hydrolysis and nucleotide exchange. Immobilization of the converter enables RuvB to convert the ATP-contained energy into a lever motion, pulling 2 nucleotides of DNA out of the RuvA tetramer per ATP hydrolyzed, thus driving DNA branch migration. The RuvB motors rotate together with the DNA substrate, which together with the progressing nucleotide cycle form the mechanistic basis for DNA recombination by continuous HJ branch migration. Branch migration allows RuvC to scan DNA until it finds its consensus sequence, where it cleaves and resolves cruciform DNA. This is Holliday junction branch migration complex subunit RuvB from Lactobacillus delbrueckii subsp. bulgaricus (strain ATCC 11842 / DSM 20081 / BCRC 10696 / JCM 1002 / NBRC 13953 / NCIMB 11778 / NCTC 12712 / WDCM 00102 / Lb 14).